Consider the following 153-residue polypeptide: Regulatory protein RecX (153 aa).

The protein belongs to the RecX family.

The protein localises to the cytoplasm. Its function is as follows. Modulates RecA activity. The protein is Regulatory protein RecX of Vibrio vulnificus (strain CMCP6).